The chain runs to 347 residues: Probable nitronate monooxygenase (347 aa).

FMN contacts are provided by residues Asn-69, Gln-171, Gly-176, Gly-213, and 232 to 235 (QIGS).

The protein belongs to the nitronate monooxygenase family. NMO class I subfamily. It depends on FMN as a cofactor.

The catalysed reaction is 3 propionate 3-nitronate + 3 O2 + H2O = 3 3-oxopropanoate + 2 nitrate + nitrite + H2O2 + 3 H(+). Nitronate monooxygenase that uses molecular oxygen to catalyze the oxidative denitrification of alkyl nitronates. Acts on propionate 3-nitronate (P3N), the presumed physiological substrate. Probably functions in the detoxification of P3N, a metabolic poison produced by plants and fungi as a defense mechanism. The protein is Probable nitronate monooxygenase (yrpB) of Bacillus subtilis (strain 168).